A 224-amino-acid polypeptide reads, in one-letter code: Urease accessory protein UreF (224 aa).

Belongs to the UreF family. In terms of assembly, ureD, UreF and UreG form a complex that acts as a GTP-hydrolysis-dependent molecular chaperone, activating the urease apoprotein by helping to assemble the nickel containing metallocenter of UreC. The UreE protein probably delivers the nickel.

The protein localises to the cytoplasm. In terms of biological role, required for maturation of urease via the functional incorporation of the urease nickel metallocenter. The chain is Urease accessory protein UreF from Pseudomonas putida (strain ATCC 700007 / DSM 6899 / JCM 31910 / BCRC 17059 / LMG 24140 / F1).